The primary structure comprises 307 residues: Pantothenate kinase (307 aa).

87–94 contacts ATP; sequence GSVAVGKS.

It belongs to the prokaryotic pantothenate kinase family.

The protein localises to the cytoplasm. The catalysed reaction is (R)-pantothenate + ATP = (R)-4'-phosphopantothenate + ADP + H(+). Its pathway is cofactor biosynthesis; coenzyme A biosynthesis; CoA from (R)-pantothenate: step 1/5. This chain is Pantothenate kinase, found in Vibrio vulnificus (strain YJ016).